Consider the following 863-residue polypeptide: Facilitated trehalose transporter Tret1 (863 aa).

Residues 1–208 (MSGRDNRGAG…RIGFQQQKAT (208 aa)) are disordered. Over 1 to 398 (MSGRDNRGAG…VYRPTTNPIY (398 aa)) the chain is Cytoplasmic. Basic and acidic residues predominate over residues 28-46 (KLKEKLTRAGEELGYHRVE). Residues 47–59 (SNLSASNTGTSLD) show a composition bias toward polar residues. Low complexity predominate over residues 72 to 85 (AAPQRHPQQQFPHL). 2 stretches are compositionally biased toward polar residues: residues 114–129 (PPQQ…RSSG) and 177–187 (KPQQQGNNKAA). Ser-254, Ser-255, and Ser-256 each carry phosphoserine. The segment at 286–307 (VLQGSSTDSDEEGDDAEHKRLI) is disordered. Residues Ser-326 and Ser-328 each carry the phosphoserine modification. The interval 332-354 (FLTSRQNFQQQRSISTDSRKSRR) is disordered. Residues 336 to 347 (RQNFQQQRSIST) are compositionally biased toward polar residues. The helical transmembrane segment at 399–419 (IWTQVLAALSVSLGSLVVGFA) threads the bilayer. The Extracellular segment spans residues 420 to 446 (SAYTSPALVSMTNTNLTSFVVTPQAAS). Asn-434 is a glycosylation site (N-linked (GlcNAc...) asparagine). The helical transmembrane segment at 447–467 (WVGGIMPLAGLAGGIAGGPFI) threads the bilayer. At 468-479 (EYLGRRNTILAT) the chain is on the cytoplasmic side. The chain crosses the membrane as a helical span at residues 480 to 500 (AVPFIISWLLIACAVNVVMVL). Topologically, residues 501–503 (CGR) are extracellular. Residues 504–524 (FLAGFCVGIASLSLPVYLGET) form a helical membrane-spanning segment. Residues 525–530 (VQPEVR) lie on the Cytoplasmic side of the membrane. Residues 531-551 (GTLGLLPTAFGNIGILLCFVA) form a helical membrane-spanning segment. Topologically, residues 552–558 (GTYMDWS) are extracellular. Residues 559–579 (MLAFLGGTLPVPFLILMFLIP) form a helical membrane-spanning segment. Residues 580 to 642 (ETPRWYVSRG…ELLKRSNLKP (63 aa)) lie on the Cytoplasmic side of the membrane. Residues 643-663 (LSISLGLMFFQQLSGINAVIF) form a helical membrane-spanning segment. Over 664-679 (YTVQIFQDAGSTIDGN) the chain is Extracellular. Residues 680–700 (VCTIIVGVVNFMATFIATVLI) traverse the membrane as a helical segment. Topologically, residues 701–706 (DRAGRK) are cytoplasmic. The helical transmembrane segment at 707 to 727 (ILLYVSNVAMILTLFVLGGFF) threads the bilayer. Residues 728–746 (YCKSTGMDTSNVGWLPLSC) are Extracellular-facing. A helical membrane pass occupies residues 747-767 (FVVYILGFSLGFGPIPWLMMG). Residues 768 to 773 (EILPAK) are Cytoplasmic-facing. Residues 774–794 (IRGSAASVATAFNWSCTFVVT) form a helical membrane-spanning segment. At 795 to 807 (KSFQDMIDVMGAH) the chain is on the extracellular side. A helical transmembrane segment spans residues 808 to 828 (GAFWMFGAICFVGLFFVIFYV). Residues 829-863 (PETQGKTLEDIERKMMGRVRRMSSVANIKPLSFNM) are Cytoplasmic-facing. Ser-851 and Ser-852 each carry phosphoserine.

The protein belongs to the major facilitator superfamily. Sugar transporter (TC 2.A.1.1) family. Trehalose transporter subfamily.

It localises to the cell membrane. Low-capacity facilitative transporter for trehalose. Does not transport maltose, sucrose or lactose. Mediates the bidirectional transfer of trehalose. Responsible for the transport of trehalose synthesized in the fat body and the incorporation of trehalose into other tissues that require a carbon source, thereby regulating trehalose levels in the hemolymph. In Drosophila mojavensis (Fruit fly), this protein is Facilitated trehalose transporter Tret1.